The sequence spans 151 residues: Large ribosomal subunit protein bL9 (151 aa).

Belongs to the bacterial ribosomal protein bL9 family.

Binds to the 23S rRNA. The polypeptide is Large ribosomal subunit protein bL9 (Bordetella avium (strain 197N)).